Consider the following 317-residue polypeptide: Acetyl-coenzyme A carboxylase carboxyl transferase subunit beta (317 aa).

The segment at 1 to 28 (MANNMTDTMTKFDTNNDSASLQQNGNKA) is disordered. The CoA carboxyltransferase N-terminal domain occupies 55-317 (PSTKCSSCHS…LCSVPNVDAQ (263 aa)). Residues Cys59, Cys62, Cys78, and Cys81 each contribute to the Zn(2+) site. The C4-type zinc finger occupies 59–81 (CSSCHSVITNTALIFNCYVCPHC).

Belongs to the AccD/PCCB family. As to quaternary structure, acetyl-CoA carboxylase is a heterohexamer composed of biotin carboxyl carrier protein (AccB), biotin carboxylase (AccC) and two subunits each of ACCase subunit alpha (AccA) and ACCase subunit beta (AccD). Requires Zn(2+) as cofactor.

The protein resides in the cytoplasm. It catalyses the reaction N(6)-carboxybiotinyl-L-lysyl-[protein] + acetyl-CoA = N(6)-biotinyl-L-lysyl-[protein] + malonyl-CoA. It participates in lipid metabolism; malonyl-CoA biosynthesis; malonyl-CoA from acetyl-CoA: step 1/1. Its function is as follows. Component of the acetyl coenzyme A carboxylase (ACC) complex. Biotin carboxylase (BC) catalyzes the carboxylation of biotin on its carrier protein (BCCP) and then the CO(2) group is transferred by the transcarboxylase to acetyl-CoA to form malonyl-CoA. The polypeptide is Acetyl-coenzyme A carboxylase carboxyl transferase subunit beta (Psychrobacter arcticus (strain DSM 17307 / VKM B-2377 / 273-4)).